We begin with the raw amino-acid sequence, 101 residues long: Chaperone modulatory protein CbpM (101 aa).

It belongs to the CbpM family.

Its function is as follows. Interacts with CbpA and inhibits both the DnaJ-like co-chaperone activity and the DNA binding activity of CbpA. Together with CbpA, modulates the activity of the DnaK chaperone system. Does not inhibit the co-chaperone activity of DnaJ. In Pseudomonas putida (strain GB-1), this protein is Chaperone modulatory protein CbpM.